The chain runs to 196 residues: Holliday junction branch migration complex subunit RuvA (196 aa).

A domain I region spans residues 1-69 (MIVGLRGTII…EDAHLLFGFC (69 aa)). The tract at residues 70-148 (EEIEKQTFER…QLLQSQEESI (79 aa)) is domain II. The interval 149-157 (APSNNLKYE) is flexible linker. The tract at residues 157-196 (EASLALQSLGFKRNEIQKVLEHIEALSVSEIVKEALKRLA) is domain III.

It belongs to the RuvA family. In terms of assembly, homotetramer. Forms an RuvA(8)-RuvB(12)-Holliday junction (HJ) complex. HJ DNA is sandwiched between 2 RuvA tetramers; dsDNA enters through RuvA and exits via RuvB. An RuvB hexamer assembles on each DNA strand where it exits the tetramer. Each RuvB hexamer is contacted by two RuvA subunits (via domain III) on 2 adjacent RuvB subunits; this complex drives branch migration. In the full resolvosome a probable DNA-RuvA(4)-RuvB(12)-RuvC(2) complex forms which resolves the HJ.

Its subcellular location is the cytoplasm. Its function is as follows. The RuvA-RuvB-RuvC complex processes Holliday junction (HJ) DNA during genetic recombination and DNA repair, while the RuvA-RuvB complex plays an important role in the rescue of blocked DNA replication forks via replication fork reversal (RFR). RuvA specifically binds to HJ cruciform DNA, conferring on it an open structure. The RuvB hexamer acts as an ATP-dependent pump, pulling dsDNA into and through the RuvAB complex. HJ branch migration allows RuvC to scan DNA until it finds its consensus sequence, where it cleaves and resolves the cruciform DNA. In Helicobacter hepaticus (strain ATCC 51449 / 3B1), this protein is Holliday junction branch migration complex subunit RuvA.